A 207-amino-acid polypeptide reads, in one-letter code: Pyridoxal 5'-phosphate synthase subunit PdxT (207 aa).

53–55 (GES) provides a ligand contact to L-glutamine. Residue Cys85 is the Nucleophile of the active site. Residues Arg114 and 143 to 144 (IR) each bind L-glutamine. Active-site charge relay system residues include His184 and Glu186.

Belongs to the glutaminase PdxT/SNO family. In the presence of PdxS, forms a dodecamer of heterodimers. Only shows activity in the heterodimer.

It catalyses the reaction aldehydo-D-ribose 5-phosphate + D-glyceraldehyde 3-phosphate + L-glutamine = pyridoxal 5'-phosphate + L-glutamate + phosphate + 3 H2O + H(+). It carries out the reaction L-glutamine + H2O = L-glutamate + NH4(+). The protein operates within cofactor biosynthesis; pyridoxal 5'-phosphate biosynthesis. Functionally, catalyzes the hydrolysis of glutamine to glutamate and ammonia as part of the biosynthesis of pyridoxal 5'-phosphate. The resulting ammonia molecule is channeled to the active site of PdxS. This chain is Pyridoxal 5'-phosphate synthase subunit PdxT, found in Acidothermus cellulolyticus (strain ATCC 43068 / DSM 8971 / 11B).